The primary structure comprises 520 residues: Ribonuclease Y (520 aa).

A helical transmembrane segment spans residues 1 to 21; sequence MDIITIIIAVIAGIGGGFGIS. One can recognise a KH domain in the interval 210-276; it reads CVSVFNIESD…RLALHKLVTD (67 aa). Residues 336 to 429 form the HD domain; that stretch reads LLQHSREVSK…VQVCDAISGA (94 aa).

It belongs to the RNase Y family.

The protein localises to the cell membrane. In terms of biological role, endoribonuclease that initiates mRNA decay. The protein is Ribonuclease Y of Flavobacterium psychrophilum (strain ATCC 49511 / DSM 21280 / CIP 103535 / JIP02/86).